The following is a 328-amino-acid chain: Phenylalanine--tRNA ligase alpha subunit (328 aa).

Position 245 (glutamate 245) interacts with Mg(2+).

The protein belongs to the class-II aminoacyl-tRNA synthetase family. Phe-tRNA synthetase alpha subunit type 1 subfamily. Tetramer of two alpha and two beta subunits. Requires Mg(2+) as cofactor.

It localises to the cytoplasm. The enzyme catalyses tRNA(Phe) + L-phenylalanine + ATP = L-phenylalanyl-tRNA(Phe) + AMP + diphosphate + H(+). The protein is Phenylalanine--tRNA ligase alpha subunit of Helicobacter pylori (strain P12).